The sequence spans 445 residues: MDKLKFGLVSLGCDKNRVDSEIILGSMNRDYEIVNDPREADVILVNTCGFIESAKQESINTILEMNKYKEKYNCKMLIATGCLTQRYGKELKELVPEIDAILGVNDYKSLDDAIEDFFNLGKKDIYCNYSDQSINEGKRIITTGEYSSYVRISEGCNNSCSYCIIPKIRGKYRSRQFENIIDEVRELSENGTKEVILIAQDTTRYGVDLYGRKRLHELLKEMSLIQGIEWIRIMYCYPEEITEELIEEIASNEKVCNYIDMPIQHISDNILKNMFRKTRKSEILDKVEKIRKKVPNIAIRTSLIVGFPGETEGDFNELCDFVKDANINNLGVFRYSREEGTKAALMPMQIADTVKEKREEDIMLIQQQVSKNLNAKKIGKVYKVIVEGFNGDYWYGRNFEMAPEIDGKVFFKSQSEIKVGSFINIKITENLEYDLIGVVYNEFSK.

Residues 4 to 119 (LKFGLVSLGC…LDDAIEDFFN (116 aa)) enclose the MTTase N-terminal domain. Positions 13, 48, 82, 156, 160, and 163 each coordinate [4Fe-4S] cluster. Residues 142–372 (TTGEYSSYVR…MLIQQQVSKN (231 aa)) enclose the Radical SAM core domain. Residues 375–441 (AKKIGKVYKV…EYDLIGVVYN (67 aa)) enclose the TRAM domain.

This sequence belongs to the methylthiotransferase family. RimO subfamily. It depends on [4Fe-4S] cluster as a cofactor.

The protein localises to the cytoplasm. The enzyme catalyses L-aspartate(89)-[ribosomal protein uS12]-hydrogen + (sulfur carrier)-SH + AH2 + 2 S-adenosyl-L-methionine = 3-methylsulfanyl-L-aspartate(89)-[ribosomal protein uS12]-hydrogen + (sulfur carrier)-H + 5'-deoxyadenosine + L-methionine + A + S-adenosyl-L-homocysteine + 2 H(+). In terms of biological role, catalyzes the methylthiolation of an aspartic acid residue of ribosomal protein uS12. This is Ribosomal protein uS12 methylthiotransferase RimO from Clostridium acetobutylicum (strain ATCC 824 / DSM 792 / JCM 1419 / IAM 19013 / LMG 5710 / NBRC 13948 / NRRL B-527 / VKM B-1787 / 2291 / W).